The primary structure comprises 321 residues: Citrate synthase (321 aa).

Catalysis depends on residues H248 and D306.

Belongs to the citrate synthase family.

It catalyses the reaction oxaloacetate + acetyl-CoA + H2O = citrate + CoA + H(+). It functions in the pathway carbohydrate metabolism; tricarboxylic acid cycle; isocitrate from oxaloacetate: step 1/2. In Bartonella elizabethae (Rochalimaea elizabethae), this protein is Citrate synthase (gltA).